Consider the following 249-residue polypeptide: uncharacterized protein (249 aa).

11-34 (IFGGRSQIGGELARRLAAGATMVL) contacts NADP(+). Residue serine 142 participates in substrate binding. Tyrosine 155 serves as the catalytic Proton acceptor.

Belongs to the short-chain dehydrogenases/reductases (SDR) family.

This is an uncharacterized protein from Mycobacterium tuberculosis (strain ATCC 25618 / H37Rv).